A 342-amino-acid chain; its full sequence is A-type ATP synthase subunit C (342 aa).

This sequence belongs to the V-ATPase V0D/AC39 subunit family. In terms of assembly, has multiple subunits with at least A(3), B(3), C, D, E, F, H, I and proteolipid K(x).

The protein resides in the cell membrane. Component of the A-type ATP synthase that produces ATP from ADP in the presence of a proton gradient across the membrane. The protein is A-type ATP synthase subunit C of Archaeoglobus fulgidus (strain ATCC 49558 / DSM 4304 / JCM 9628 / NBRC 100126 / VC-16).